Consider the following 497-residue polypeptide: Protein root UVB sensitive 6 (497 aa).

This sequence belongs to the RUS1 family.

Required for normal embryo development. The protein is Protein root UVB sensitive 6 of Arabidopsis thaliana (Mouse-ear cress).